The following is a 230-amino-acid chain: 3-beta-hydroxysteroid-Delta(8),Delta(7)-isomerase (230 aa).

At T2 the chain carries N-acetylthreonine. 4 consecutive transmembrane segments (helical) span residues 29-49 (WHIL…TWLL), 66-86 (LCWF…FVLY), 121-141 (METI…IAFL), and 185-205 (FWFY…VLVL). Residues 61–204 (WRRLSLCWFA…LWLVLPGVLV (144 aa)) enclose the EXPERA domain.

The protein belongs to the EBP family.

It localises to the endoplasmic reticulum membrane. The protein localises to the nucleus envelope. Its subcellular location is the cytoplasmic vesicle. It catalyses the reaction lathosterol = 5alpha-cholest-8-en-3beta-ol. The enzyme catalyses zymosterol = 5alpha-cholesta-7,24-dien-3beta-ol. It carries out the reaction 5,6alpha-epoxy-5alpha-cholestan-3beta-ol + H2O = 5alpha-cholestane-3beta,5,6beta-triol. The catalysed reaction is 5,6beta-epoxy-5beta-cholestan-3beta-ol + H2O = 5alpha-cholestane-3beta,5,6beta-triol. Its pathway is steroid biosynthesis; cholesterol biosynthesis. With respect to regulation, cholestenol Delta-isomerase and cholesterol-5,6-epoxide hydrolase (ChEH) activities are inhibited by tamoxifen and the selective AEBS ligand (4-benzyl-phenoxy)-ethyl-N-pyrrolidine (PBPE). ChEH activity is inhibited by oleic acid. Its function is as follows. Isomerase that catalyzes the conversion of Delta(8)-sterols to their corresponding Delta(7)-isomers a catalytic step in the postlanosterol biosynthesis of cholesterol. Functionally, component of the microsomal antiestrogen binding site (AEBS), a multiproteic complex at the ER membrane that consists of an association between EBP and 7-dehydrocholesterol reductase/DHCR7. This complex is responsible for cholesterol-5,6-epoxide hydrolase (ChEH) activity, which consists in the hydration of cholesterol-5,6-epoxides (5,6-EC) into cholestane-3beta,5alpha,6beta-triol (CT). The precise role of each component of this complex has not been described yet. The chain is 3-beta-hydroxysteroid-Delta(8),Delta(7)-isomerase from Homo sapiens (Human).